An 88-amino-acid chain; its full sequence is MLTAQDKQKIIKENQLAESDTGSPEVQVALLTARINDLQGHFEAHKKDNHSRRGLLRLVSQRRKLLDYLHDKDVERYRSLIKKLNIRR.

It belongs to the universal ribosomal protein uS15 family. In terms of assembly, part of the 30S ribosomal subunit. Forms a bridge to the 50S subunit in the 70S ribosome, contacting the 23S rRNA.

One of the primary rRNA binding proteins, it binds directly to 16S rRNA where it helps nucleate assembly of the platform of the 30S subunit by binding and bridging several RNA helices of the 16S rRNA. Its function is as follows. Forms an intersubunit bridge (bridge B4) with the 23S rRNA of the 50S subunit in the ribosome. The polypeptide is Small ribosomal subunit protein uS15 (Francisella tularensis subsp. tularensis (strain FSC 198)).